The primary structure comprises 304 residues: 33 kDa chaperonin (304 aa).

2 cysteine pairs are disulfide-bonded: Cys-245–Cys-247 and Cys-278–Cys-281.

It belongs to the HSP33 family. Post-translationally, under oxidizing conditions two disulfide bonds are formed involving the reactive cysteines. Under reducing conditions zinc is bound to the reactive cysteines and the protein is inactive.

The protein localises to the cytoplasm. In terms of biological role, redox regulated molecular chaperone. Protects both thermally unfolding and oxidatively damaged proteins from irreversible aggregation. Plays an important role in the bacterial defense system toward oxidative stress. This chain is 33 kDa chaperonin, found in Microcystis aeruginosa (strain NIES-843 / IAM M-2473).